The primary structure comprises 195 residues: dTTP/UTP pyrophosphatase (195 aa).

Asp73 functions as the Proton acceptor in the catalytic mechanism.

This sequence belongs to the Maf family. YhdE subfamily. The cofactor is a divalent metal cation.

The protein resides in the cytoplasm. It carries out the reaction dTTP + H2O = dTMP + diphosphate + H(+). The enzyme catalyses UTP + H2O = UMP + diphosphate + H(+). Functionally, nucleoside triphosphate pyrophosphatase that hydrolyzes dTTP and UTP. May have a dual role in cell division arrest and in preventing the incorporation of modified nucleotides into cellular nucleic acids. This is dTTP/UTP pyrophosphatase from Desulfotalea psychrophila (strain LSv54 / DSM 12343).